Consider the following 460-residue polypeptide: A-type ATP synthase subunit B (460 aa).

Belongs to the ATPase alpha/beta chains family. In terms of assembly, has multiple subunits with at least A(3), B(3), C, D, E, F, H, I and proteolipid K(x).

The protein localises to the cell membrane. Functionally, component of the A-type ATP synthase that produces ATP from ADP in the presence of a proton gradient across the membrane. The B chain is a regulatory subunit. The polypeptide is A-type ATP synthase subunit B (Methanosarcina acetivorans (strain ATCC 35395 / DSM 2834 / JCM 12185 / C2A)).